A 404-amino-acid polypeptide reads, in one-letter code: Cysteine desulfurase IscS (404 aa).

Pyridoxal 5'-phosphate is bound by residues 75 to 76 (AT), Asn155, Gln183, and 203 to 205 (SAH). N6-(pyridoxal phosphate)lysine is present on Lys206. Residue Thr243 coordinates pyridoxal 5'-phosphate. The active-site Cysteine persulfide intermediate is the Cys328. Residue Cys328 coordinates [2Fe-2S] cluster.

It belongs to the class-V pyridoxal-phosphate-dependent aminotransferase family. NifS/IscS subfamily. In terms of assembly, homodimer. Forms a heterotetramer with IscU, interacts with other sulfur acceptors. Pyridoxal 5'-phosphate serves as cofactor.

It localises to the cytoplasm. The enzyme catalyses (sulfur carrier)-H + L-cysteine = (sulfur carrier)-SH + L-alanine. Its pathway is cofactor biosynthesis; iron-sulfur cluster biosynthesis. In terms of biological role, master enzyme that delivers sulfur to a number of partners involved in Fe-S cluster assembly, tRNA modification or cofactor biosynthesis. Catalyzes the removal of elemental sulfur atoms from cysteine to produce alanine. Functions as a sulfur delivery protein for Fe-S cluster synthesis onto IscU, an Fe-S scaffold assembly protein, as well as other S acceptor proteins. In Tolumonas auensis (strain DSM 9187 / NBRC 110442 / TA 4), this protein is Cysteine desulfurase IscS.